The chain runs to 389 residues: Chalcone synthase H2 (389 aa).

Residue Cys-164 is part of the active site.

It belongs to the thiolase-like superfamily. Chalcone/stilbene synthases family.

The protein localises to the cytoplasm. The catalysed reaction is (E)-4-coumaroyl-CoA + 3 malonyl-CoA + 3 H(+) = 2',4,4',6'-tetrahydroxychalcone + 3 CO2 + 4 CoA. It functions in the pathway secondary metabolite biosynthesis; flavonoid biosynthesis. In terms of biological role, involved in the biosynthesis of prenylated phenolics natural products which contribute to the bitter taste of beer and display broad biological activities. Chalcone synthase that can use 4-coumaroyl-CoA to produce 4,2',4',6'-tetrahydroxychalcone (also termed naringenin-chalcone or chalcone) which can, under specific conditions, spontaneously isomerize into naringenin. In Humulus lupulus (European hop), this protein is Chalcone synthase H2.